The chain runs to 409 residues: Na(+)-translocating NADH-quinone reductase subunit F (409 aa).

Residues 5–25 (FIFGIIAFTALVLVLAVIILF) traverse the membrane as a helical segment. Residues 34 to 128 (GDITISINDD…SMDVELPEEI (95 aa)) enclose the 2Fe-2S ferredoxin-type domain. [2Fe-2S] cluster is bound by residues Cys71, Cys77, Cys80, and Cys112. The 141-residue stretch at 131 to 271 (VKKWECTVIS…SGPFGEFFAK (141 aa)) folds into the FAD-binding FR-type domain.

The protein belongs to the NqrF family. Composed of six subunits; NqrA, NqrB, NqrC, NqrD, NqrE and NqrF. [2Fe-2S] cluster serves as cofactor. The cofactor is FAD.

The protein resides in the cell inner membrane. The enzyme catalyses a ubiquinone + n Na(+)(in) + NADH + H(+) = a ubiquinol + n Na(+)(out) + NAD(+). NQR complex catalyzes the reduction of ubiquinone-1 to ubiquinol by two successive reactions, coupled with the transport of Na(+) ions from the cytoplasm to the periplasm. The first step is catalyzed by NqrF, which accepts electrons from NADH and reduces ubiquinone-1 to ubisemiquinone by a one-electron transfer pathway. This is Na(+)-translocating NADH-quinone reductase subunit F from Haemophilus ducreyi (strain 35000HP / ATCC 700724).